We begin with the raw amino-acid sequence, 219 residues long: Casein kinase II subunit beta' (219 aa).

T2 carries the post-translational modification Phosphothreonine; by autocatalysis.

Belongs to the casein kinase 2 subunit beta family. As to quaternary structure, tetramer of two alpha and two beta' subunits. Phosphorylated by alpha subunit.

In terms of biological role, participates in Wnt signaling. Plays a complex role in regulating the basal catalytic activity of the alpha subunit. This Drosophila melanogaster (Fruit fly) protein is Casein kinase II subunit beta' (CkIIbeta2).